Reading from the N-terminus, the 376-residue chain is N-acetyldiaminopimelate deacetylase (376 aa).

Asp69 is a catalytic residue. The Proton acceptor role is filled by Glu128.

It belongs to the peptidase M20A family. N-acetyldiaminopimelate deacetylase subfamily.

It carries out the reaction N-acetyl-(2S,6S)-2,6-diaminopimelate + H2O = (2S,6S)-2,6-diaminopimelate + acetate. It participates in amino-acid biosynthesis; L-lysine biosynthesis via DAP pathway; LL-2,6-diaminopimelate from (S)-tetrahydrodipicolinate (acetylase route): step 3/3. Its function is as follows. Catalyzes the conversion of N-acetyl-diaminopimelate to diaminopimelate and acetate. This Bacillus cereus (strain G9842) protein is N-acetyldiaminopimelate deacetylase.